The primary structure comprises 135 residues: Small ribosomal subunit protein uS12 (135 aa).

D89 bears the 3-methylthioaspartic acid mark. The tract at residues 108-135 (NKRTVSRSKYGTKKAKATDKKATDSKKK) is disordered. Residues 111–122 (TVSRSKYGTKKA) are compositionally biased toward basic residues. Residues 123-135 (KATDKKATDSKKK) are compositionally biased toward basic and acidic residues.

Belongs to the universal ribosomal protein uS12 family. Part of the 30S ribosomal subunit. Contacts proteins S8 and S17. May interact with IF1 in the 30S initiation complex.

Functionally, with S4 and S5 plays an important role in translational accuracy. Its function is as follows. Interacts with and stabilizes bases of the 16S rRNA that are involved in tRNA selection in the A site and with the mRNA backbone. Located at the interface of the 30S and 50S subunits, it traverses the body of the 30S subunit contacting proteins on the other side and probably holding the rRNA structure together. The combined cluster of proteins S8, S12 and S17 appears to hold together the shoulder and platform of the 30S subunit. The sequence is that of Small ribosomal subunit protein uS12 from Helicobacter pylori (strain HPAG1).